Reading from the N-terminus, the 424-residue chain is UDP-N-acetylglucosamine 1-carboxyvinyltransferase (424 aa).

22 to 23 (KN) contacts phosphoenolpyruvate. Arg-93 is a binding site for UDP-N-acetyl-alpha-D-glucosamine. Cys-117 acts as the Proton donor in catalysis. The residue at position 117 (Cys-117) is a 2-(S-cysteinyl)pyruvic acid O-phosphothioketal. UDP-N-acetyl-alpha-D-glucosamine is bound by residues 122-126 (RPVDL), 162-165 (KVSV), Asp-307, and Ile-329.

This sequence belongs to the EPSP synthase family. MurA subfamily.

Its subcellular location is the cytoplasm. It catalyses the reaction phosphoenolpyruvate + UDP-N-acetyl-alpha-D-glucosamine = UDP-N-acetyl-3-O-(1-carboxyvinyl)-alpha-D-glucosamine + phosphate. It functions in the pathway cell wall biogenesis; peptidoglycan biosynthesis. Functionally, cell wall formation. Adds enolpyruvyl to UDP-N-acetylglucosamine. The protein is UDP-N-acetylglucosamine 1-carboxyvinyltransferase of Histophilus somni (strain 129Pt) (Haemophilus somnus).